The following is an 89-amino-acid chain: U-scoloptoxin(11)-Sm4a (89 aa).

The first 17 residues, 1-17 (MFFKLVLVSAVAIQALS), serve as a signal peptide directing secretion.

It belongs to the scoloptoxin-11 family. Post-translationally, contains 3 disulfide bonds. Expressed by the venom gland.

The protein resides in the secreted. The polypeptide is U-scoloptoxin(11)-Sm4a (Scolopendra morsitans (Tanzanian blue ringleg centipede)).